A 1222-amino-acid polypeptide reads, in one-letter code: Protein SCP160 (1222 aa).

Residues 1-12 (MSEEQTAIDSPP) are compositionally biased toward polar residues. Residues 1–59 (MSEEQTAIDSPPSTVEGSVETVTTIDSPSTTASTIAATAEEHPQLEKKPTPLPSLKDLP) are disordered. The span at 13-38 (STVEGSVETVTTIDSPSTTASTIAAT) shows a compositional bias: low complexity. A compositionally biased stretch (basic and acidic residues) spans 39–49 (AEEHPQLEKKP). At Thr-50 the chain carries Phosphothreonine. 5 positions are modified to phosphoserine: Ser-54, Ser-63, Ser-85, Ser-87, and Ser-89. The tract at residues 79–98 (KPAVSNSPSPSPSAPSLTTG) is disordered. The KH 1 domain occupies 177–249 (PINAVIEVPS…ESVNLAKAKI (73 aa)). Ser-630 is modified (phosphoserine). 5 KH domains span residues 634–702 (KSKM…KKYL), 712–771 (IITK…HEEL), 782–851 (GHKM…AKRV), 861–929 (FVTE…VEEI), and 939–1001 (SVTK…EKKI). A Phosphoserine modification is found at Ser-1112. The KH 7 domain maps to 1153-1216 (YAGYVWGADT…AGVEKAGEMV (64 aa)).

Its subcellular location is the endoplasmic reticulum membrane. The protein localises to the nucleus membrane. Its function is as follows. Involved in the control of mitotic chromosome transmission. Required during cell division for faithful partitioning of the ER-nuclear envelope membranes which, in S.cerevisiae, enclose the duplicated chromosomes. The sequence is that of Protein SCP160 (SCP160) from Saccharomyces cerevisiae (strain ATCC 204508 / S288c) (Baker's yeast).